Here is a 539-residue protein sequence, read N- to C-terminus: Chaperonin GroEL (539 aa).

Residues 30-33, 87-91, Gly414, 479-481, and Asp495 each bind ATP; these read TLGP, DGTTT, and DAL.

Belongs to the chaperonin (HSP60) family. In terms of assembly, forms a cylinder of 14 subunits composed of two heptameric rings stacked back-to-back. Interacts with the co-chaperonin GroES.

Its subcellular location is the cytoplasm. The catalysed reaction is ATP + H2O + a folded polypeptide = ADP + phosphate + an unfolded polypeptide.. In terms of biological role, together with its co-chaperonin GroES, plays an essential role in assisting protein folding. The GroEL-GroES system forms a nano-cage that allows encapsulation of the non-native substrate proteins and provides a physical environment optimized to promote and accelerate protein folding. This chain is Chaperonin GroEL, found in Caldicellulosiruptor saccharolyticus (strain ATCC 43494 / DSM 8903 / Tp8T 6331).